A 115-amino-acid polypeptide reads, in one-letter code: MNMLMILSVNIILSTCLIMIAFWLPQLNVYTEKANPYECGFDPMSSARLPFSMKFFLVAITFLLFDLEIALLLPLPWAIQMHNINMMMSTAFILVSILALGLAYEWLQKGLEWTE.

A run of 3 helical transmembrane segments spans residues 4–24 (LMILSVNIILSTCLIMIAFWL), 55–75 (FFLVAITFLLFDLEIALLLPL), and 84–104 (INMMMSTAFILVSILALGLAY).

This sequence belongs to the complex I subunit 3 family. In terms of assembly, core subunit of respiratory chain NADH dehydrogenase (Complex I) which is composed of 45 different subunits. Interacts with TMEM186. Interacts with TMEM242.

The protein resides in the mitochondrion inner membrane. The catalysed reaction is a ubiquinone + NADH + 5 H(+)(in) = a ubiquinol + NAD(+) + 4 H(+)(out). In terms of biological role, core subunit of the mitochondrial membrane respiratory chain NADH dehydrogenase (Complex I) which catalyzes electron transfer from NADH through the respiratory chain, using ubiquinone as an electron acceptor. Essential for the catalytic activity of complex I. The polypeptide is NADH-ubiquinone oxidoreductase chain 3 (Podomys floridanus (Florida mouse)).